The chain runs to 57 residues: Large ribosomal subunit protein bL32 (57 aa).

The segment at 1 to 37 (MAVQQNKPTRSKRGMRRSHDALTAVTSLSVDKTSGEK) is disordered.

It belongs to the bacterial ribosomal protein bL32 family.

The protein is Large ribosomal subunit protein bL32 of Escherichia fergusonii (strain ATCC 35469 / DSM 13698 / CCUG 18766 / IAM 14443 / JCM 21226 / LMG 7866 / NBRC 102419 / NCTC 12128 / CDC 0568-73).